The sequence spans 67 residues: UPF0434 protein Lcho_2556 (67 aa).

The protein belongs to the UPF0434 family.

In Leptothrix cholodnii (strain ATCC 51168 / LMG 8142 / SP-6) (Leptothrix discophora (strain SP-6)), this protein is UPF0434 protein Lcho_2556.